We begin with the raw amino-acid sequence, 465 residues long: MEHPWIPNSHKAILDEMLEAIGVSSVDDLYRDIPPTILLSPEEWDSLPIGEGRPLSEAEVLARINDILSRNKYFTDPPPFVGGGVWPRYVPSVVKALITRGEFLTAYTPYQAEISQGLMQALFEYQSLVAELLEMEVVNASLYDWSSAVGEAMLMARRVTRRNRVLVPETMNPLHLETATTYAYGGGIRVEKVRVDRETGFIDLEDLESRLSQGDTAALYMEYPSSYTGVIDENVEAAGEAVHKAGGLFILGVEPVSMAILKPPGRLGADIAVGDGQPLGLGLNYGGPYLGVFAVRWDGRLVRQMPGRLIGMTVDAEGRRAFAMILQTREQHIRRAKATSNITTNEALMAIAAAVYLSLLGPQGLREVAEASWYMSHYAAKRLSELRGVEAPLLEGEFIMDFTVRLPMDAGVARRRLLEKGVLAGIPLGGFSFFSDNDMLLTVTEAHTRRHVDLLVNLLDSVLGG.

The protein belongs to the GcvP family. N-terminal subunit subfamily. The glycine cleavage system is composed of four proteins: P, T, L and H. In this organism, the P 'protein' is a heterodimer of two subunits.

It catalyses the reaction N(6)-[(R)-lipoyl]-L-lysyl-[glycine-cleavage complex H protein] + glycine + H(+) = N(6)-[(R)-S(8)-aminomethyldihydrolipoyl]-L-lysyl-[glycine-cleavage complex H protein] + CO2. Functionally, the glycine cleavage system catalyzes the degradation of glycine. The P protein binds the alpha-amino group of glycine through its pyridoxal phosphate cofactor; CO(2) is released and the remaining methylamine moiety is then transferred to the lipoamide cofactor of the H protein. The polypeptide is Probable glycine dehydrogenase (decarboxylating) subunit 1 (Aeropyrum pernix (strain ATCC 700893 / DSM 11879 / JCM 9820 / NBRC 100138 / K1)).